Reading from the N-terminus, the 269-residue chain is NAD-capped RNA hydrolase NudC (269 aa).

R74 serves as a coordination point for substrate. Residues C103, C106, C121, and C124 each contribute to the Zn(2+) site. Y129 provides a ligand contact to substrate. Residues 130–253 enclose the Nudix hydrolase domain; it reads PRIFPCIIVA…TIARQLIENT (124 aa). A divalent metal cation-binding residues include A163, E179, and E183. Positions 164-185 match the Nudix box motif; the sequence is GFLEVGETLEQCVAREVKEETG. Substrate is bound at residue 197–204; it reads QPWAFPSS. E224 lines the a divalent metal cation pocket. Residue A246 coordinates substrate.

Belongs to the Nudix hydrolase family. NudC subfamily. Homodimer. Mg(2+) serves as cofactor. Mn(2+) is required as a cofactor. The cofactor is Zn(2+).

It carries out the reaction a 5'-end NAD(+)-phospho-ribonucleoside in mRNA + H2O = a 5'-end phospho-adenosine-phospho-ribonucleoside in mRNA + beta-nicotinamide D-ribonucleotide + 2 H(+). The enzyme catalyses NAD(+) + H2O = beta-nicotinamide D-ribonucleotide + AMP + 2 H(+). It catalyses the reaction NADH + H2O = reduced beta-nicotinamide D-ribonucleotide + AMP + 2 H(+). MRNA decapping enzyme that specifically removes the nicotinamide adenine dinucleotide (NAD) cap from a subset of mRNAs by hydrolyzing the diphosphate linkage to produce nicotinamide mononucleotide (NMN) and 5' monophosphate mRNA. The NAD-cap is present at the 5'-end of some mRNAs and stabilizes RNA against 5'-processing. Has preference for mRNAs with a 5'-end purine. Catalyzes the hydrolysis of a broad range of dinucleotide pyrophosphates. The sequence is that of NAD-capped RNA hydrolase NudC from Vibrio atlanticus (strain LGP32) (Vibrio splendidus (strain Mel32)).